Here is a 727-residue protein sequence, read N- to C-terminus: ATP-dependent zinc metalloprotease FtsH (727 aa).

Residues 1-6 (MQKAFR) lie on the Cytoplasmic side of the membrane. A helical transmembrane segment spans residues 7–27 (NVLVIAIIGVIIFGVFSYING). Residues 28–110 (NGNTPKQLSY…KVKEEEKQSV (83 aa)) are Extracellular-facing. The helical transmembrane segment at 111-131 (FVSMLTTLIPVLIIAFLFIFF) threads the bilayer. At 132 to 727 (LSQAQGGGGG…PNDPNNPSNR (596 aa)) the chain is on the cytoplasmic side. 205-212 (GPPGTGKT) lines the ATP pocket. Zn(2+) is bound at residue histidine 427. The active site involves glutamate 428. The Zn(2+) site is built by histidine 431 and aspartate 503. Composition is skewed to basic and acidic residues over residues 645–684 (LEEG…DQLR) and 691–706 (NDQH…DTGH). The segment at 645-727 (LEEGKEDMRE…PNDPNNPSNR (83 aa)) is disordered. Residues 710–727 (PNIDKPYNPNDPNNPSNR) are compositionally biased toward low complexity.

In the central section; belongs to the AAA ATPase family. This sequence in the C-terminal section; belongs to the peptidase M41 family. Homohexamer. Zn(2+) serves as cofactor.

It is found in the cell membrane. Functionally, acts as a processive, ATP-dependent zinc metallopeptidase for both cytoplasmic and membrane proteins. Plays a role in the quality control of integral membrane proteins. This Staphylococcus haemolyticus (strain JCSC1435) protein is ATP-dependent zinc metalloprotease FtsH.